The sequence spans 405 residues: Phosphatidylinositol 5-phosphate 4-kinase type-2 alpha (405 aa).

Position 2 is an N-acetylalanine (Ala2). Position 3 is a phosphothreonine (Thr3). Phosphoserine is present on Ser14. One can recognise a PIPK domain in the interval 33–405; it reads ASDPLLSVLM…RFLDFIGHIL (373 aa). Residues 59-65 are required for interaction with PIP5K1A; the sequence is VMLMPDD. Lys89 and Lys145 each carry N6-acetyllysine. A disordered region spans residues 288-328; it reads QEEVECEENDGEEEGESDSTHPIGTPPDSPGNTLNSSPPLA. A compositionally biased stretch (acidic residues) spans 289–304; sequence EEVECEENDGEEEGES.

Homodimer. Interacts with PIP4K2B; the interaction may regulate localization to the nucleus. Probably interacts with PIP5K1A; the interaction inhibits PIP5K1A kinase activity. In terms of processing, phosphorylated in tyrosines. Phosphorylation is induced by light and increases kinase activity. As to expression, detected in rod photoreceptor cells.

Its subcellular location is the cell membrane. It localises to the nucleus. The protein resides in the lysosome. The protein localises to the cytoplasm. It is found in the photoreceptor inner segment. Its subcellular location is the cell projection. It localises to the cilium. The protein resides in the photoreceptor outer segment. The catalysed reaction is a 1,2-diacyl-sn-glycero-3-phospho-(1D-myo-inositol-5-phosphate) + ATP = a 1,2-diacyl-sn-glycero-3-phospho-(1D-myo-inositol-4,5-bisphosphate) + ADP + H(+). The enzyme catalyses 1,2-dihexadecanoyl-sn-glycero-3-phospho-(1D-myo-inositol-5-phosphate) + ATP = 1,2-dihexadecanoyl-sn-glycero-3-phospho-(1D-myo-inositol-4,5-bisphosphate) + ADP + H(+). It catalyses the reaction 1,2-dihexadecanoyl-sn-glycero-3-phospho-(1D-myo-inositol-5-phosphate) + GTP = 1,2-dihexadecanoyl-sn-glycero-3-phospho-(1D-myo-inositol-4,5-bisphosphate) + GDP + H(+). Its activity is regulated as follows. In rod outer segments, activated by light. In terms of biological role, catalyzes the phosphorylation of phosphatidylinositol 5-phosphate (PtdIns5P) on the fourth hydroxyl of the myo-inositol ring, to form phosphatidylinositol 4,5-bisphosphate (PtdIns(4,5)P2). Has both ATP- and GTP-dependent kinase activities. May exert its function by regulating the levels of PtdIns5P, which functions in the cytosol by increasing AKT activity and in the nucleus signals through ING2. May regulate the pool of cytosolic PtdIns5P in response to the activation of tyrosine phosphorylation. Required for lysosome-peroxisome membrane contacts and intracellular cholesterol transport through modulating peroxisomal PtdIns(4,5)P2 level. In collaboration with PIP4K2B, has a role in mediating autophagy in times of nutrient stress. Required for autophagosome-lysosome fusion and the regulation of cellular lipid metabolism. Negatively regulates insulin signaling through a catalytic-independent mechanism. PIP4Ks interact with PIP5Ks and suppress PIP5K-mediated PtdIns(4,5)P2 synthesis and insulin-dependent conversion to PtdIns(3,4,5)P3. May be involved in thrombopoiesis, and the terminal maturation of megakaryocytes and regulation of their size. This is Phosphatidylinositol 5-phosphate 4-kinase type-2 alpha from Mus musculus (Mouse).